A 252-amino-acid polypeptide reads, in one-letter code: Large ribosomal subunit protein uL10m (252 aa).

The N-terminal 24 residues, methionine 1–histidine 24, are a transit peptide targeting the mitochondrion.

Belongs to the universal ribosomal protein uL10 family. In terms of assembly, component of the mitochondrial ribosome large subunit (39S) which comprises a 16S rRNA and about 50 distinct proteins.

It localises to the mitochondrion. In Danio rerio (Zebrafish), this protein is Large ribosomal subunit protein uL10m (mrpl10).